The sequence spans 1019 residues: MKLLKPTWVNHNGKPIFSVDIHPDGTKFATGGQGQDSGKVVIWNMAPVLKEEDEKNENIPKMLCQMDNHLACVNCVRWSNNGVYLASGGDDKLIMVWKRAAYIGPSTVFGSSSKLTNVEQWRCVSILRSHSGDVMDVAWSPHDAWLASCSVDNTVVIWNAVKFPEILATLKGHSGLVKGLTWDPVGKYIASQADDRSLKVWRTMDWQLETSITKPFDECGGTTHVLRLSWSPDGHYLVSAHAMNNSGPTAQIIERDGWKTNMDFVGHRKAVTVVKFNPKIFKKKQKNGSSTKSSCPYCCCAVGSKDRSLSVWLTCLKRPLVVIHELFDKSIMDISWTLNGLGILVCSMDGSVAFLDFSQDELGDPLSEEEKSNIHQSTYGKSLAIMTEAQLSTTIIENPEMLKYQQRQQQQQAEQKNASIREASGAATTAPKVASMVNGESLEDIRKNLLKKQVETRTADGRRRITPLCIAQLDTGDFSTAFFNSIPISGTLAGSIMSSQNNQQLMSLDSNAANSLNTSKPSAEPTAASIKPTDDAASKDGVNATSVSTAPPASSSSVLTTPSKIEPMKAFDSRFTERSKATSGTAVVTNTNQTVVDRLKDQNLIKDNKPKDILESSSDSEEKIPAAKPLSAPKRKLELEGETVEKKKKGRPRKDSRLVPVTLTVQSPAALASEKDAACISAPALALKLPTPIPQKSFTLQVSSDPSMYLEVENEMTTVGGSKLSRLKCNREGKEWETVLTSRILTAAGSCEIVCVACEKRMLSVFSACGRRLLPPIILNTPISTLHCTGSYIMTLTTAATLSVWDVHKQTVIVRDESLQTILSGSDTTVSQILLTQHGIPVMSMSDGKAYCFNPSLSTWNLVSDKQDSLAQCADFRSSLPSQEAMLCSGPLAVIQGRTSNSGRQAARLFSMPHLVQQETTLAYLENQIAAALMLQSSHEYRHWLLIYARYLVNEGFEYRLRELCKDLLGPVHYSRGSQWESTVMGLRKRELLKELLPVIGQNLFQRLFTEYQEQLDIL.

WD repeat units lie at residues 11 to 53, 68 to 107, 129 to 168, 172 to 211, 220 to 263, 266 to 322, and 326 to 367; these read HNGK…KEED, NHLA…GPST, SHSG…EILA, GHSG…LETS, GGTT…TNMD, GHRK…PLVV, and LFDK…DPLS. Residues 23 to 443 form an interaction with RBBP4 region; sequence PDGTKFATGG…ASMVNGESLE (421 aa). 2 stretches are compositionally biased toward low complexity: residues 406-415 and 544-561; these read QRQQQQQAEQ and ATSV…VLTT. Disordered regions lie at residues 406 to 433, 513 to 561, and 599 to 633; these read QRQQ…APKV, ANSL…VLTT, and LKDQ…LSAP. Residues 444 to 1019 form an interaction with HDAC1 region; that stretch reads DIRKNLLKKQ…TEYQEQLDIL (576 aa). The segment covering 599-625 has biased composition (basic and acidic residues); that stretch reads LKDQNLIKDNKPKDILESSSDSEEKIP. An interaction with HDAC2 region spans residues 960-1019; that stretch reads RLRELCKDLLGPVHYSRGSQWESTVMGLRKRELLKELLPVIGQNLFQRLFTEYQEQLDIL.

Belongs to the WD repeat HIR1 family. In terms of assembly, interacts with ASF1, HDAC1, HDAC2 and RBBP4.

It localises to the nucleus. Its function is as follows. Cooperates with ASF1A to promote replication-independent chromatin assembly. May regulate the transcription of a variety of genes controlling cell growth. This is Protein HIRA (HIRA) from Gallus gallus (Chicken).